A 337-amino-acid chain; its full sequence is Cytoskeleton protein RodZ (337 aa).

Residues 1–111 (MNTEATHDQN…LGKRRKKRDG (111 aa)) lie on the Cytoplasmic side of the membrane. Residues 19–71 (LRNAREQLGLSQQAVAERLCLKVSTVRDIEEDKAPADLASTFLRGYIRSYARL) form the HTH cro/C1-type domain. The segment at residues 30–49 (QQAVAERLCLKVSTVRDIEE) is a DNA-binding region (H-T-H motif). The helical; Signal-anchor for type II membrane protein transmembrane segment at 112 to 132 (WLMTFTWLVLFVVIGLSGAWW) threads the bilayer. At 133-337 (WQDRKAQQEE…TLNAEQSPAQ (205 aa)) the chain is on the periplasmic side. Over residues 144–167 (TTMADQSSAELSSNSEQGQSVPLN) the composition is skewed to polar residues. Residues 144–235 (TTMADQSSAE…PTAATTPDGA (92 aa)) form a disordered region. Over residues 168–207 (TSTTTDPATTSTPPASVDTTATNTQTPAVTAPAPAVDPQQ) the composition is skewed to low complexity. A compositionally biased stretch (polar residues) spans 208–218 (NAVVSPSQANV). Residues 219–235 (DTAATPAPTAATTPDGA) are compositionally biased toward low complexity.

This sequence belongs to the RodZ family.

It is found in the cell inner membrane. Its function is as follows. Cytoskeletal protein that is involved in cell-shape control through regulation of the length of the long axis. The chain is Cytoskeleton protein RodZ from Escherichia coli (strain K12 / MC4100 / BW2952).